Reading from the N-terminus, the 464-residue chain is Protein FAM90A5 (464 aa).

Disordered stretches follow at residues 16 to 42, 70 to 389, and 415 to 437; these read RAQT…DPRL, PATL…HDGA, and HSPE…SEAP. Composition is skewed to basic and acidic residues over residues 74 to 89 and 97 to 114; these read GKKE…KPRV and NKDK…DPQR. A compositionally biased stretch (low complexity) spans 180-197; it reads LASLSPLRKASLSSSSSL.

It belongs to the FAM90 family.

This Homo sapiens (Human) protein is Protein FAM90A5.